A 235-amino-acid chain; its full sequence is MGGDALTFKLFGLTFNTTNIVSGLIIYAIVFFTLYGMSRKIQMKPTGAQNVFEWLVDFTNGIVRSQMPASEQGHYSFFAFVLFVFIFFANQFGLIFQFHWNGAEVLRSPTADPVVTLTLSLMVMVLAFAAGVAHNGLGGYLKGYTKPFTLMLPVNIIEDFANFLTLGLRIFGNIFAGELLMSLIANMAFSHGILTIIPGLFLELAWQGFSVFIGSIQAYVFVTLTTVYISRKISE.

5 helical membrane passes run 17 to 37, 76 to 96, 113 to 133, 179 to 201, and 211 to 230; these read TTNIVSGLIIYAIVFFTLYGM, SFFAFVLFVFIFFANQFGLIF, PVVTLTLSLMVMVLAFAAGVA, LLMSLIANMAFSHGILTIIPGLF, and VFIGSIQAYVFVTLTTVYIS.

It belongs to the ATPase A chain family. In terms of assembly, F-type ATPases have 2 components, CF(1) - the catalytic core - and CF(0) - the membrane proton channel. CF(1) has five subunits: alpha(3), beta(3), gamma(1), delta(1), epsilon(1). CF(0) has three main subunits: a(1), b(2) and c(9-12). The alpha and beta chains form an alternating ring which encloses part of the gamma chain. CF(1) is attached to CF(0) by a central stalk formed by the gamma and epsilon chains, while a peripheral stalk is formed by the delta and b chains.

It localises to the cell membrane. Key component of the proton channel; it plays a direct role in the translocation of protons across the membrane. This Limosilactobacillus reuteri subsp. reuteri (strain JCM 1112) (Lactobacillus reuteri) protein is ATP synthase subunit a.